We begin with the raw amino-acid sequence, 323 residues long: Methionyl-tRNA formyltransferase (323 aa).

Position 113–116 (113–116) interacts with (6S)-5,6,7,8-tetrahydrofolate; it reads SLLP.

The protein belongs to the Fmt family.

It carries out the reaction L-methionyl-tRNA(fMet) + (6R)-10-formyltetrahydrofolate = N-formyl-L-methionyl-tRNA(fMet) + (6S)-5,6,7,8-tetrahydrofolate + H(+). In terms of biological role, attaches a formyl group to the free amino group of methionyl-tRNA(fMet). The formyl group appears to play a dual role in the initiator identity of N-formylmethionyl-tRNA by promoting its recognition by IF2 and preventing the misappropriation of this tRNA by the elongation apparatus. This chain is Methionyl-tRNA formyltransferase, found in Nitrosococcus oceani (strain ATCC 19707 / BCRC 17464 / JCM 30415 / NCIMB 11848 / C-107).